A 515-amino-acid chain; its full sequence is Probable coatomer subunit delta (515 aa).

The segment covering 161-180 has biased composition (basic and acidic residues); sequence AKQAMAEKAKELKRAQKEAL. A disordered region spans residues 161 to 231; it reads AKQAMAEKAK…GGKALKLGGK (71 aa). Residues 187-198 show a composition bias toward low complexity; that stretch reads SYQSSTGISSSS. The MHD domain occupies 276–515; it reads REVVHVRTEE…TFNSENFEIV (240 aa).

Belongs to the adaptor complexes medium subunit family. Delta-COP subfamily. In terms of assembly, oligomeric complex that consists of at least the alpha, beta, beta', gamma, delta, epsilon and zeta subunits.

Its subcellular location is the cytoplasm. The protein resides in the golgi apparatus membrane. It localises to the cytoplasmic vesicle. It is found in the COPI-coated vesicle membrane. The coatomer is a cytosolic protein complex that binds to dilysine motifs and reversibly associates with Golgi non-clathrin-coated vesicles, which further mediate biosynthetic protein transport from the ER, via the Golgi up to the trans Golgi network. Coatomer complex is required for budding from Golgi membranes, and is essential for the retrograde Golgi-to-ER transport of dilysine-tagged proteins. This is Probable coatomer subunit delta from Caenorhabditis elegans.